Reading from the N-terminus, the 382-residue chain is Carbamoyl phosphate synthase small chain (382 aa).

The interval 1 to 189 (MIKSALLVLE…ELPAAKNESE (189 aa)) is CPSase. Serine 47, glycine 241, and glycine 243 together coordinate L-glutamine. Residues 193 to 380 (HVVAYDYGVK…IDLIQTYRSS (188 aa)) enclose the Glutamine amidotransferase type-1 domain. Residue cysteine 269 is the Nucleophile of the active site. Positions 270, 273, 311, 313, and 314 each coordinate L-glutamine. Catalysis depends on residues histidine 353 and glutamate 355.

The protein belongs to the CarA family. Composed of two chains; the small (or glutamine) chain promotes the hydrolysis of glutamine to ammonia, which is used by the large (or ammonia) chain to synthesize carbamoyl phosphate. Tetramer of heterodimers (alpha,beta)4.

The enzyme catalyses hydrogencarbonate + L-glutamine + 2 ATP + H2O = carbamoyl phosphate + L-glutamate + 2 ADP + phosphate + 2 H(+). The catalysed reaction is L-glutamine + H2O = L-glutamate + NH4(+). It participates in amino-acid biosynthesis; L-arginine biosynthesis; carbamoyl phosphate from bicarbonate: step 1/1. Its pathway is pyrimidine metabolism; UMP biosynthesis via de novo pathway; (S)-dihydroorotate from bicarbonate: step 1/3. Small subunit of the glutamine-dependent carbamoyl phosphate synthetase (CPSase). CPSase catalyzes the formation of carbamoyl phosphate from the ammonia moiety of glutamine, carbonate, and phosphate donated by ATP, constituting the first step of 2 biosynthetic pathways, one leading to arginine and/or urea and the other to pyrimidine nucleotides. The small subunit (glutamine amidotransferase) binds and cleaves glutamine to supply the large subunit with the substrate ammonia. This Pectobacterium atrosepticum (strain SCRI 1043 / ATCC BAA-672) (Erwinia carotovora subsp. atroseptica) protein is Carbamoyl phosphate synthase small chain.